The following is a 788-amino-acid chain: Patatin-like phospholipase domain-containing protein DEHA2B04136g (788 aa).

A helical membrane pass occupies residues 136-156 (WPILIFISCWISLLCFMYIIV). Positions 311–503 (LCLSGGACFT…RTDIPIDALN (193 aa)) constitute a PNPLA domain. The GXSXG signature appears at 342 to 346 (GTSGG). Catalysis depends on serine 344, which acts as the Nucleophile. Aspartate 490 serves as the catalytic Proton acceptor. Residues 662 to 672 (ANFNTLTSSDS) are compositionally biased toward polar residues. Residues 662–771 (ANFNTLTSSD…DTGSRFLKSF (110 aa)) are disordered. Composition is skewed to acidic residues over residues 690-705 (MFDD…DDEV) and 723-749 (EDGD…DEAN).

The protein belongs to the PLPL family.

It localises to the membrane. In terms of biological role, probable lipid hydrolase. The sequence is that of Patatin-like phospholipase domain-containing protein DEHA2B04136g from Debaryomyces hansenii (strain ATCC 36239 / CBS 767 / BCRC 21394 / JCM 1990 / NBRC 0083 / IGC 2968) (Yeast).